A 122-amino-acid polypeptide reads, in one-letter code: Ig heavy chain V region M603 (122 aa).

The region spanning 1–121 (EVKLVESGGG…WGAGTTVTVS (121 aa)) is the Ig-like domain.

In Mus musculus (Mouse), this protein is Ig heavy chain V region M603.